The following is a 381-amino-acid chain: MKKISLLGATGSIGWQTYDILKEQREAFQLVAFSSGKNMEKTREMIDNLKPELVSVQLEEDALLLAKEYPTIHFTFGAQGLVEVATHPASTVLVNAVLGSVGLESTLAAIRMGKTIAIANKETLVTAGHLVMAEAKKYNATILPVDSEHSAIFQSMNGENPKDIERLIITASGGSFRDKTRDQLKHVTVADALNHPNWSMGAKITIDSATMMNKGLEVIEAHVLFDMPYEKIDVLLHRESIIHSLVEYHDTSVIAQLGTPDMRVPIQYALSYPDRIPLHNGQRLNLAQIGQLHFQEMDFERYPALRLAYEAGRTGGTILTAMNAANEAAVAAFLQGKITFLQIDETIERVMQAHQNIAIPDLQTILQVDSETRKIVLDMVK.

Positions 10, 11, 12, 13, 36, 37, 38, and 120 each coordinate NADPH. Lys121 lines the 1-deoxy-D-xylulose 5-phosphate pocket. Position 122 (Glu122) interacts with NADPH. Asp146 serves as a coordination point for Mn(2+). Ser147, Glu148, Ser172, and His195 together coordinate 1-deoxy-D-xylulose 5-phosphate. Glu148 serves as a coordination point for Mn(2+). Residue Gly201 participates in NADPH binding. Positions 208, 213, 214, and 217 each coordinate 1-deoxy-D-xylulose 5-phosphate. Glu217 provides a ligand contact to Mn(2+).

Belongs to the DXR family. The cofactor is Mg(2+). Requires Mn(2+) as cofactor.

It carries out the reaction 2-C-methyl-D-erythritol 4-phosphate + NADP(+) = 1-deoxy-D-xylulose 5-phosphate + NADPH + H(+). The protein operates within isoprenoid biosynthesis; isopentenyl diphosphate biosynthesis via DXP pathway; isopentenyl diphosphate from 1-deoxy-D-xylulose 5-phosphate: step 1/6. Its function is as follows. Catalyzes the NADPH-dependent rearrangement and reduction of 1-deoxy-D-xylulose-5-phosphate (DXP) to 2-C-methyl-D-erythritol 4-phosphate (MEP). In Lysinibacillus sphaericus (strain C3-41), this protein is 1-deoxy-D-xylulose 5-phosphate reductoisomerase.